A 98-amino-acid polypeptide reads, in one-letter code: Small ribosomal subunit protein bS6 (98 aa).

Belongs to the bacterial ribosomal protein bS6 family.

Its function is as follows. Binds together with bS18 to 16S ribosomal RNA. The protein is Small ribosomal subunit protein bS6 of Staphylococcus carnosus (strain TM300).